The following is a 262-amino-acid chain: Nodulation protein J (262 aa).

One can recognise an ABC transmembrane type-2 domain in the interval 33 to 259 (ASLLGHLAEP…FLSTALLRRR (227 aa)). Helical transmembrane passes span 35 to 55 (LLGH…GLGV), 60 to 80 (VGGV…SAMT), 125 to 145 (AALA…TQWL), 148 to 168 (LYAL…GMVV), 177 to 197 (YFIF…GAVF), and 231 to 251 (VVDV…PFFL).

This sequence belongs to the ABC-2 integral membrane protein family. Lipooligosaccharide exporter (TC 3.A.1.102) subfamily. In terms of assembly, the complex is composed of two ATP-binding proteins (NodI) and two transmembrane proteins (NodJ).

It localises to the cell inner membrane. In terms of biological role, part of the ABC transporter complex NodIJ involved in the export of the nodulation factors (Nod factors), the bacterial signal molecules that induce symbiosis and subsequent nodulation induction. Nod factors are LCO (lipo-chitin oligosaccharide), a modified beta-1,4-linked N-acetylglucosamine oligosaccharide. This subunit encodes the transporter. The chain is Nodulation protein J (nodJ) from Rhizobium leguminosarum bv. trifolii.